A 299-amino-acid chain; its full sequence is Protein bem46 (299 aa).

A helical membrane pass occupies residues 15 to 32 (YSGMASLAVTLIALGFLY).

This sequence belongs to the serine esterase family.

The protein localises to the membrane. In terms of biological role, suppressor of bem1/bud5. This is Protein bem46 (bem46) from Schizosaccharomyces pombe (strain 972 / ATCC 24843) (Fission yeast).